The primary structure comprises 138 residues: Basic phospholipase A2 homolog Ts-K49b (138 aa).

An N-terminal signal peptide occupies residues 1 to 16; that stretch reads MRTLWIMAVLLVGVEG. 6 disulfide bridges follow: Cys-42/Cys-131, Cys-44/Cys-60, Cys-65/Cys-138, Cys-66/Cys-104, Cys-73/Cys-97, and Cys-91/Cys-102. The interval 121–133 is important for membrane-damaging activities in eukaryotes and bacteria; heparin-binding; that stretch reads KKKKINLKLFCKK.

As to expression, expressed by the venom gland.

It localises to the secreted. Its function is as follows. Snake venom phospholipase A2 homolog that lacks catalytic activity. It shows myotoxic and weak anticoagulant activities. A model of myotoxic mechanism has been proposed: an apo Lys49-PLA2 is activated by the entrance of a hydrophobic molecule (e.g. fatty acid) at the hydrophobic channel of the protein leading to a reorientation of a monomer. This reorientation causes a transition between 'inactive' to 'active' states, causing alignment of C-terminal and membrane-docking sites (MDoS) side-by-side and putting the membrane-disruption sites (MDiS) in the same plane, exposed to solvent and in a symmetric position for both monomers. The MDoS region stabilizes the toxin on membrane by the interaction of charged residues with phospholipid head groups. Subsequently, the MDiS region destabilizes the membrane with penetration of hydrophobic residues. This insertion causes a disorganization of the membrane, allowing an uncontrolled influx of ions (i.e. calcium and sodium), and eventually triggering irreversible intracellular alterations and cell death. The chain is Basic phospholipase A2 homolog Ts-K49b from Trimeresurus stejnegeri (Chinese green tree viper).